Reading from the N-terminus, the 143-residue chain is ATP synthase subunit b' (143 aa).

Residues 6-26 (ATLPVMALQFILLAVILNAVF) form a helical membrane-spanning segment.

The protein belongs to the ATPase B chain family. F-type ATPases have 2 components, F(1) - the catalytic core - and F(0) - the membrane proton channel. F(1) has five subunits: alpha(3), beta(3), gamma(1), delta(1), epsilon(1). F(0) has four main subunits: a(1), b(1), b'(1) and c(10-14). The alpha and beta chains form an alternating ring which encloses part of the gamma chain. F(1) is attached to F(0) by a central stalk formed by the gamma and epsilon chains, while a peripheral stalk is formed by the delta, b and b' chains.

The protein localises to the cellular thylakoid membrane. F(1)F(0) ATP synthase produces ATP from ADP in the presence of a proton or sodium gradient. F-type ATPases consist of two structural domains, F(1) containing the extramembraneous catalytic core and F(0) containing the membrane proton channel, linked together by a central stalk and a peripheral stalk. During catalysis, ATP synthesis in the catalytic domain of F(1) is coupled via a rotary mechanism of the central stalk subunits to proton translocation. In terms of biological role, component of the F(0) channel, it forms part of the peripheral stalk, linking F(1) to F(0). The b'-subunit is a diverged and duplicated form of b found in plants and photosynthetic bacteria. The sequence is that of ATP synthase subunit b' from Microcystis aeruginosa (strain NIES-843 / IAM M-2473).